A 355-amino-acid chain; its full sequence is Tyrosine recombinase XerC (355 aa).

One can recognise a Core-binding (CB) domain in the interval 4–89 (TQFDGDIDSF…AVRGFFAWAY (86 aa)). Residues 138–180 (DDGGAAAASGSGKAAGKTADKSADTVNRSEAPARADKRDNARV) form a disordered region. A compositionally biased stretch (low complexity) spans 141–154 (GAAAASGSGKAAGK). The Tyr recombinase domain maps to 158-349 (KSADTVNRSE…SIEQLKNRYG (192 aa)). A compositionally biased stretch (basic and acidic residues) spans 168 to 178 (APARADKRDNA). Catalysis depends on residues Arg-200, Lys-224, His-301, Arg-304, and His-327. Residue Tyr-336 is the O-(3'-phospho-DNA)-tyrosine intermediate of the active site.

This sequence belongs to the 'phage' integrase family. XerC subfamily. Forms a cyclic heterotetrameric complex composed of two molecules of XerC and two molecules of XerD.

The protein resides in the cytoplasm. Its function is as follows. Site-specific tyrosine recombinase, which acts by catalyzing the cutting and rejoining of the recombining DNA molecules. The XerC-XerD complex is essential to convert dimers of the bacterial chromosome into monomers to permit their segregation at cell division. It also contributes to the segregational stability of plasmids. This Bifidobacterium longum subsp. infantis (strain ATCC 15697 / DSM 20088 / JCM 1222 / NCTC 11817 / S12) protein is Tyrosine recombinase XerC.